A 545-amino-acid chain; its full sequence is T-complex protein 1 subunit gamma (545 aa).

Residue methionine 1 is modified to N-acetylmethionine. The tract at residues 1-24 (MMGHRPVLVLSQNTKRESGRKVQS) is disordered. Serine 11 carries the phosphoserine modification. Lysine 15 is covalently cross-linked (Glycyl lysine isopeptide (Lys-Gly) (interchain with G-Cter in SUMO2)). Residues glycine 42, glycine 94, threonine 95, threonine 96, serine 97, threonine 162, and lysine 163 each coordinate ADP. ATP-binding residues include glycine 42, glycine 94, threonine 95, and threonine 96. At serine 170 the chain carries Phosphoserine. The residue at position 222 (lysine 222) is an N6-acetyllysine. 2 positions are modified to phosphoserine: serine 243 and serine 244. Position 247 is a phosphotyrosine (tyrosine 247). Glycyl lysine isopeptide (Lys-Gly) (interchain with G-Cter in SUMO2) cross-links involve residues lysine 248 and lysine 249. Residue serine 252 is modified to Phosphoserine. Cysteines 366 and 372 form a disulfide. Lysine 381 participates in a covalent cross-link: Glycyl lysine isopeptide (Lys-Gly) (interchain with G-Cter in SUMO2). Glycine 411 is a binding site for ADP. Glycine 411 serves as a coordination point for ATP. A phosphothreonine mark is found at threonine 430 and threonine 459. ADP-binding residues include glycine 482, glutamate 483, glutamate 497, and lysine 502. An ATP-binding site is contributed by glycine 482. Glutamate 497 is an ATP binding site. The disordered stretch occupies residues 526–545 (HKKKGDDQSRQGGAPDAGQE).

Belongs to the TCP-1 chaperonin family. In terms of assembly, component of the chaperonin-containing T-complex (TRiC), a hexadecamer composed of two identical back-to-back stacked rings enclosing a protein folding chamber. Each ring is made up of eight different subunits: TCP1/CCT1, CCT2, CCT3, CCT4, CCT5, CCT6A/CCT6, CCT7, CCT8. Interacts with PACRG. Interacts with DNAAF4. Interacts with DLEC1.

Its subcellular location is the cytoplasm. The enzyme catalyses ATP + H2O = ADP + phosphate + H(+). Functionally, component of the chaperonin-containing T-complex (TRiC), a molecular chaperone complex that assists the folding of actin, tubulin and other proteins upon ATP hydrolysis. The TRiC complex mediates the folding of WRAP53/TCAB1, thereby regulating telomere maintenance. As part of the TRiC complex may play a role in the assembly of BBSome, a complex involved in ciliogenesis regulating transports vesicles to the cilia. The polypeptide is T-complex protein 1 subunit gamma (CCT3) (Macaca fascicularis (Crab-eating macaque)).